The sequence spans 205 residues: Ras-related protein Rab-1A (205 aa).

Residue Ser-2 is modified to N-acetylserine. GTP contacts are provided by Ser-20, Gly-21, Gly-23, Lys-24, Ser-25, Cys-26, Glu-38, and Thr-43. Residue Ser-25 coordinates Mg(2+). The Switch 1 motif lies at 34–48 (DTYTESYISTIGVDF). Thr-43 provides a ligand contact to Mg(2+). Glycyl lysine isopeptide (Lys-Gly) (interchain with G-Cter in ubiquitin) cross-links involve residues Lys-49 and Lys-61. Mg(2+) is bound at residue Asp-66. Positions 66 to 83 (DTAGQERFRTITSSYYRG) match the Switch 2 motif. Positions 69, 124, 125, 127, 155, and 156 each coordinate GTP. Residues 178–205 (PGATAGGAEKSNVKIQSTPVKQSGGGCC) form a disordered region. Ser-194 carries the phosphoserine modification. S-geranylgeranyl cysteine attachment occurs at residues Cys-204 and Cys-205.

This sequence belongs to the small GTPase superfamily. Rab family. In terms of assembly, may interact with YIPF5. Interacts with C9orf72; the interaction mediates recruitment of RAB1A to the ATG1/ULK1 kinase complex. Interacts with GDI1; this promotes dissociation from membranes. Mg(2+) is required as a cofactor. In terms of processing, phosphorylated by CDK1 kinase during mitosis. Post-translationally, ubiquitinated via 'Lys-11'-linked ubiquitination on Lys-49 and Lys-61; impairing the recruitment of guanosine diphosphate (GDP) dissociation inhibitor 1/GDI1.

Its subcellular location is the golgi apparatus. The protein resides in the endoplasmic reticulum. The protein localises to the early endosome. It is found in the cytoplasm. It localises to the cytosol. Its subcellular location is the membrane. The protein resides in the melanosome. The enzyme catalyses GTP + H2O = GDP + phosphate + H(+). Regulated by guanine nucleotide exchange factors (GEFs) which promote the exchange of bound GDP for free GTP. Regulated by GTPase activating proteins (GAPs) which increase the GTP hydrolysis activity. Inhibited by GDP dissociation inhibitors (GDIs). Its function is as follows. The small GTPases Rab are key regulators of intracellular membrane trafficking, from the formation of transport vesicles to their fusion with membranes. Rabs cycle between an inactive GDP-bound form and an active GTP-bound form that is able to recruit to membranes different sets of downstream effectors directly responsible for vesicle formation, movement, tethering and fusion. RAB1A regulates vesicular protein transport from the endoplasmic reticulum (ER) to the Golgi compartment and on to the cell surface, and plays a role in IL-8 and growth hormone secretion. Required to modulate the compacted morphology of the Golgi. Regulates the level of CASR present at the cell membrane. Plays a role in cell adhesion and cell migration, via its role in protein trafficking. Plays a role in autophagosome assembly and cellular defense reactions against pathogenic bacteria. Plays a role in microtubule-dependent protein transport by early endosomes and in anterograde melanosome transport. This is Ras-related protein Rab-1A (RAB1A) from Canis lupus familiaris (Dog).